Consider the following 156-residue polypeptide: SsrA-binding protein (156 aa).

Residues Arg-134–Arg-156 form a disordered region.

This sequence belongs to the SmpB family.

The protein resides in the cytoplasm. Its function is as follows. Required for rescue of stalled ribosomes mediated by trans-translation. Binds to transfer-messenger RNA (tmRNA), required for stable association of tmRNA with ribosomes. tmRNA and SmpB together mimic tRNA shape, replacing the anticodon stem-loop with SmpB. tmRNA is encoded by the ssrA gene; the 2 termini fold to resemble tRNA(Ala) and it encodes a 'tag peptide', a short internal open reading frame. During trans-translation Ala-aminoacylated tmRNA acts like a tRNA, entering the A-site of stalled ribosomes, displacing the stalled mRNA. The ribosome then switches to translate the ORF on the tmRNA; the nascent peptide is terminated with the 'tag peptide' encoded by the tmRNA and targeted for degradation. The ribosome is freed to recommence translation, which seems to be the essential function of trans-translation. This is SsrA-binding protein from Paenarthrobacter aurescens (strain TC1).